Consider the following 256-residue polypeptide: Non-structural protein ORF4b (256 aa).

The protein localises to the host nucleus. It localises to the host nucleolus. The protein resides in the host cytoplasm. Plays a role in the inhibition of host innate immunity by inhibiting the interaction between host IKBKE and MAVS. In turn, this inhibition prevents the production of host interferon beta. Additionally, may also interfere with host antiviral response within the nucleus. This chain is Non-structural protein ORF4b (ORF4b), found in Bat coronavirus HKU5 (BtCoV).